Consider the following 241-residue polypeptide: DNA repair protein RecO (241 aa).

It belongs to the RecO family.

Functionally, involved in DNA repair and RecF pathway recombination. The sequence is that of DNA repair protein RecO from Yersinia enterocolitica serotype O:8 / biotype 1B (strain NCTC 13174 / 8081).